The primary structure comprises 215 residues: uncharacterized protein (215 aa).

The protein belongs to the thiaminase-2 family.

This is an uncharacterized protein from Haemophilus influenzae (strain ATCC 51907 / DSM 11121 / KW20 / Rd).